We begin with the raw amino-acid sequence, 236 residues long: 2-C-methyl-D-erythritol 4-phosphate cytidylyltransferase (236 aa).

Belongs to the IspD/TarI cytidylyltransferase family. IspD subfamily. Homodimer.

It carries out the reaction 2-C-methyl-D-erythritol 4-phosphate + CTP + H(+) = 4-CDP-2-C-methyl-D-erythritol + diphosphate. It participates in isoprenoid biosynthesis; isopentenyl diphosphate biosynthesis via DXP pathway; isopentenyl diphosphate from 1-deoxy-D-xylulose 5-phosphate: step 2/6. Catalyzes the formation of 4-diphosphocytidyl-2-C-methyl-D-erythritol from CTP and 2-C-methyl-D-erythritol 4-phosphate (MEP). The protein is 2-C-methyl-D-erythritol 4-phosphate cytidylyltransferase of Salmonella typhimurium (strain LT2 / SGSC1412 / ATCC 700720).